A 628-amino-acid chain; its full sequence is Set1/Ash2 histone methyltransferase complex subunit ASH2 (628 aa).

M1 is subject to N-acetylmethionine. The segment covering 1–18 (MAAAGAGPGQEAGAGPGP) has biased composition (gly residues). Residues 1-66 (MAAAGAGPGQ…SGEAEGGEAN (66 aa)) form a PHD-type; atypical zinc finger. A disordered region spans residues 1–107 (MAAAGAGPGQ…QAGSVDEENG (107 aa)). Residues 36 to 65 (AAGAAAPPGEGISAAPTVEPSSGEAEGGEA) show a composition bias toward low complexity. The DNA-binding stretch occupies residues 67-177 (LVDVSGGLET…MCLSALANLT (111 aa)). Phosphoserine is present on S101. The segment at 117 to 150 (CGICTKWFTADTFGIDTSSCLPFMTNYSFHCNVC) adopts a C4-type zinc-finger fold. The span at 235 to 252 (LVKEHPDPGSKDPEEDYP) shows a compositional bias: basic and acidic residues. The disordered stretch occupies residues 235–331 (LVKEHPDPGS…AQRLPPHGYP (97 aa)). Positions 270-282 (NQKQSSAVSTSGN) are enriched in polar residues. The segment covering 283 to 295 (LNGGIAAGSSGKG) has biased composition (gly residues). Position 296 is an asymmetric dimethylarginine; by PRMT1 and PRMT5 (R296). Position 316 is a phosphoserine (S316). The segment at 316–628 (SDPLFSAQRL…DGRRSPPWEP (313 aa)) is interaction with RBBP5. Residues 360 to 583 (LDCWAGKPIP…VSINFGPCFK (224 aa)) enclose the B30.2/SPRY domain.

As to quaternary structure, interacts with HCFC1. Core component of several methyltransferase-containing complexes including MLL1/MLL, MLL2/3 (also named ASCOM complex) and MLL4/WBP7. Each complex is at least composed of ASH2L, RBBP5, WDR5, DPY30, one or more specific histone methyltransferases (KMT2A/MLL1, KMT2D/MLL2, KMT2C/MLL3 and KMT2B/MLL4), and the facultative components PAGR1, BACC1, CHD8, E2F6, HCFC1, HCFC2, HSP70, INO80C, KDM6A, KANSL1, LAS1L, MAX, MCRS1, MEN1, MGA, KAT8/MOF, NCOA6, PAXIP1/PTIP, PELP1, PHF20, PRP31, RING2, RUVB1/TIP49A, RUVB2/TIP49B, SENP3, TAF1, TAF4, TAF6, TAF7, TAF9, TEX10 and alpha- and beta-tubulin. Component of the SET1 complex, at least composed of the catalytic subunit (SETD1A or SETD1B), WDR5, WDR82, RBBP5, ASH2L/ASH2, CXXC1/CFP1, HCFC1 and DPY30. Found in a complex with RBBP5, ASH2L, DPY30, KMT2A, KMT2D and WDR5. Component of a histone methylation complex composed of at least ZNF335, RBBP5, ASH2L and WDR5; the complex may have histone H3-specific methyltransferase activity, however does not have specificity for 'Lys-4' of histone H3. Within the complex, interacts with ZNF335. Interacts with RBBP5. Components of this complex may associate with components of a nuclear receptor-mediated transcription complex to form a complex at least composed of ZNF335, HCFC1, CCAR2, EMSY, MKI67, RBBP5, ASH2L and WDR5. Within this complex also interacts with CCAR2 and EMSY. Interacts with DPY30. Interacts with SETD1A and SETD1B. Both monomethylated and dimethylated on arginine residues in the C-terminus. Arg-296 is the major site. Methylation is not required for nuclear localization, nor for MLL complex integrity or maintenance of global histone H3K4me3 levels. In terms of tissue distribution, ubiquitously expressed. Predominantly expressed in adult heart and testis and fetal lung and liver, with barely detectable expression in adult lung, liver, kidney, prostate, and peripheral leukocytes.

The protein resides in the nucleus. In terms of biological role, transcriptional regulator. Component or associated component of some histone methyltransferase complexes which regulates transcription through recruitment of those complexes to gene promoters. Component of the Set1/Ash2 histone methyltransferase (HMT) complex, a complex that specifically methylates 'Lys-4' of histone H3, but not if the neighboring 'Lys-9' residue is already methylated. As part of the MLL1/MLL complex it is involved in methylation and dimethylation at 'Lys-4' of histone H3. May play a role in hematopoiesis. In association with RBBP5 and WDR5, stimulates the histone methyltransferase activities of KMT2A, KMT2B, KMT2C, KMT2D, SETD1A and SETD1B. This chain is Set1/Ash2 histone methyltransferase complex subunit ASH2 (ASH2L), found in Homo sapiens (Human).